Here is a 249-residue protein sequence, read N- to C-terminus: Small ribosomal subunit protein uS2 (249 aa).

Belongs to the universal ribosomal protein uS2 family.

The sequence is that of Small ribosomal subunit protein uS2 from Listeria monocytogenes serovar 1/2a (strain ATCC BAA-679 / EGD-e).